The following is a 322-amino-acid chain: Glutamyl-Q tRNA(Asp) synthetase (322 aa).

L-glutamate-binding positions include Arg-28–Ser-32 and Glu-64. The 'HIGH' region signature appears at Pro-31 to Ser-41. Residues Cys-120, Cys-122, Tyr-134, and Cys-138 each coordinate Zn(2+). L-glutamate-binding residues include Tyr-191 and Arg-209. Residues Lys-247–Gln-251 carry the 'KMSKS' region motif. Lys-250 provides a ligand contact to ATP.

It belongs to the class-I aminoacyl-tRNA synthetase family. GluQ subfamily. Requires Zn(2+) as cofactor.

Its function is as follows. Catalyzes the tRNA-independent activation of glutamate in presence of ATP and the subsequent transfer of glutamate onto a tRNA(Asp). Glutamate is transferred on the 2-amino-5-(4,5-dihydroxy-2-cyclopenten-1-yl) moiety of the queuosine in the wobble position of the QUC anticodon. The chain is Glutamyl-Q tRNA(Asp) synthetase from Pectobacterium atrosepticum (strain SCRI 1043 / ATCC BAA-672) (Erwinia carotovora subsp. atroseptica).